The sequence spans 268 residues: tRNA pseudouridine synthase A (268 aa).

Asp-52 (nucleophile) is an active-site residue. Position 113 (Tyr-113) interacts with substrate.

Belongs to the tRNA pseudouridine synthase TruA family. Homodimer.

The enzyme catalyses uridine(38/39/40) in tRNA = pseudouridine(38/39/40) in tRNA. Formation of pseudouridine at positions 38, 39 and 40 in the anticodon stem and loop of transfer RNAs. This chain is tRNA pseudouridine synthase A, found in Chlamydia abortus (strain DSM 27085 / S26/3) (Chlamydophila abortus).